The following is a 531-amino-acid chain: Probable rhamnogalacturonate lyase A (531 aa).

A signal peptide spans 1 to 20; it reads MLSKTSLLSLLSLAAGVVNA. 2 cysteine pairs are disulfide-bonded: Cys-50/Cys-93 and Cys-184/Cys-193.

Belongs to the polysaccharide lyase 4 family.

It is found in the secreted. The catalysed reaction is Endotype eliminative cleavage of L-alpha-rhamnopyranosyl-(1-&gt;4)-alpha-D-galactopyranosyluronic acid bonds of rhamnogalacturonan I domains in ramified hairy regions of pectin leaving L-rhamnopyranose at the reducing end and 4-deoxy-4,5-unsaturated D-galactopyranosyluronic acid at the non-reducing end.. Pectinolytic enzymes consist of four classes of enzymes: pectin lyase, polygalacturonase, pectin methylesterase and rhamnogalacturonase. Degrades the rhamnogalacturonan I (RG-I) backbone of pectin. In Aspergillus niger (strain ATCC MYA-4892 / CBS 513.88 / FGSC A1513), this protein is Probable rhamnogalacturonate lyase A (rglA).